A 154-amino-acid polypeptide reads, in one-letter code: PTS system glucose-specific EIIA component (154 aa).

One can recognise a PTS EIIA type-1 domain in the interval 26-130; the sequence is DEVFKERMLG…SIKSPIIFTN (105 aa). Zn(2+)-binding residues include His-63 and His-78. His-78 (tele-phosphohistidine intermediate; for EIIA activity) is an active-site residue. His-78 carries the post-translational modification Phosphohistidine; by HPr.

In terms of assembly, heterodimer with glycerol kinase (glpk). The cofactor is Zn(2+).

Its subcellular location is the cytoplasm. Its function is as follows. The phosphoenolpyruvate-dependent sugar phosphotransferase system (sugar PTS), a major carbohydrate active transport system, catalyzes the phosphorylation of incoming sugar substrates concomitantly with their translocation across the cell membrane. The enzyme II complex composed of PtsG and Crr is involved in glucose transport. This chain is PTS system glucose-specific EIIA component (crr), found in Mycoplasma capricolum subsp. capricolum (strain California kid / ATCC 27343 / NCTC 10154).